The following is a 602-amino-acid chain: Glutamine--fructose-6-phosphate aminotransferase [isomerizing] (602 aa).

Cys2 (nucleophile; for GATase activity) is an active-site residue. The Glutamine amidotransferase type-2 domain maps to 2 to 219; the sequence is CGIIGYIGDR…DGEYAILTKD (218 aa). SIS domains lie at 280–420 and 453–592; these read VAEE…VLGT and LAET…PDKP. Lys597 functions as the For Fru-6P isomerization activity in the catalytic mechanism.

In terms of assembly, homodimer.

It is found in the cytoplasm. The catalysed reaction is D-fructose 6-phosphate + L-glutamine = D-glucosamine 6-phosphate + L-glutamate. Functionally, catalyzes the first step in hexosamine metabolism, converting fructose-6P into glucosamine-6P using glutamine as a nitrogen source. This is Glutamine--fructose-6-phosphate aminotransferase [isomerizing] from Thermococcus kodakarensis (strain ATCC BAA-918 / JCM 12380 / KOD1) (Pyrococcus kodakaraensis (strain KOD1)).